The chain runs to 336 residues: MDRIVEIEKFSPDETYETSLRPSNFDGYIGQENIKKNLEIFIKAAKKRNECLDHILFSGPAGLGKTTLANIISYEMNANIKTTAAPMIEKSGDLAAILTNLSEGDILFIDEIHRLSPAIEEVLYPAMEDFRLDIIIGSGPAAQTIKIDLPKFTLIGATTRAGMLSNPLRDRFGMQFRLEFYKNEELAIILEKAALKLNKTCEKNAALEIAKRSRSTPRIALRLLKRVRDFADVNDEEIISEKRAKEALDSLGVNELGFDAMDLRYLELLTEAKRKPIGLSSIAAALSEDENTIEDVIEPYLLANGYIERTAKGRIASLKSFDVLKLKYNKGLFDEK.

The tract at residues Met-1–Tyr-181 is large ATPase domain (RuvB-L). ATP is bound by residues Leu-20, Arg-21, Gly-62, Lys-65, Thr-66, Thr-67, Glu-128 to Phe-130, Arg-171, Tyr-181, and Arg-218. Residue Thr-66 coordinates Mg(2+). The tract at residues Lys-182 to Gly-252 is small ATPAse domain (RuvB-S). The interval Glu-255–Lys-336 is head domain (RuvB-H). DNA-binding residues include Arg-309 and Arg-314.

The protein belongs to the RuvB family. As to quaternary structure, homohexamer. Forms an RuvA(8)-RuvB(12)-Holliday junction (HJ) complex. HJ DNA is sandwiched between 2 RuvA tetramers; dsDNA enters through RuvA and exits via RuvB. An RuvB hexamer assembles on each DNA strand where it exits the tetramer. Each RuvB hexamer is contacted by two RuvA subunits (via domain III) on 2 adjacent RuvB subunits; this complex drives branch migration. In the full resolvosome a probable DNA-RuvA(4)-RuvB(12)-RuvC(2) complex forms which resolves the HJ.

The protein localises to the cytoplasm. The enzyme catalyses ATP + H2O = ADP + phosphate + H(+). The RuvA-RuvB-RuvC complex processes Holliday junction (HJ) DNA during genetic recombination and DNA repair, while the RuvA-RuvB complex plays an important role in the rescue of blocked DNA replication forks via replication fork reversal (RFR). RuvA specifically binds to HJ cruciform DNA, conferring on it an open structure. The RuvB hexamer acts as an ATP-dependent pump, pulling dsDNA into and through the RuvAB complex. RuvB forms 2 homohexamers on either side of HJ DNA bound by 1 or 2 RuvA tetramers; 4 subunits per hexamer contact DNA at a time. Coordinated motions by a converter formed by DNA-disengaged RuvB subunits stimulates ATP hydrolysis and nucleotide exchange. Immobilization of the converter enables RuvB to convert the ATP-contained energy into a lever motion, pulling 2 nucleotides of DNA out of the RuvA tetramer per ATP hydrolyzed, thus driving DNA branch migration. The RuvB motors rotate together with the DNA substrate, which together with the progressing nucleotide cycle form the mechanistic basis for DNA recombination by continuous HJ branch migration. Branch migration allows RuvC to scan DNA until it finds its consensus sequence, where it cleaves and resolves cruciform DNA. The chain is Holliday junction branch migration complex subunit RuvB from Campylobacter lari (strain RM2100 / D67 / ATCC BAA-1060).